An 89-amino-acid chain; its full sequence is Small ribosomal subunit protein bS20 (89 aa).

Belongs to the bacterial ribosomal protein bS20 family.

In terms of biological role, binds directly to 16S ribosomal RNA. The polypeptide is Small ribosomal subunit protein bS20 (Sulfurovum sp. (strain NBC37-1)).